The chain runs to 304 residues: uncharacterized protein (304 aa).

The signal sequence occupies residues 1-15 (MTRPRPPLGPAMAGA). One can recognise a Thioredoxin domain in the interval 28-151 (NAAASTDADR…LSRWVDSLLS (124 aa)).

This is an uncharacterized protein from Mycobacterium bovis (strain ATCC BAA-935 / AF2122/97).